The chain runs to 660 residues: Macrolide export ATP-binding/permease protein MacB (660 aa).

The ABC transporter domain occupies 10 to 248 (LVLENIVRKF…AKGQALQGKQ (239 aa)). 46-53 (GASGSGKS) contributes to the ATP binding site. A run of 4 helical transmembrane segments spans residues 285–305 (FLTM…VALG), 532–552 (ILTL…GIGV), 593–613 (IIGG…FVLF), and 625–645 (SIII…FSPA).

It belongs to the ABC transporter superfamily. Macrolide exporter (TC 3.A.1.122) family. As to quaternary structure, homodimer.

It localises to the cell inner membrane. Functionally, non-canonical ABC transporter that contains transmembrane domains (TMD), which form a pore in the inner membrane, and an ATP-binding domain (NBD), which is responsible for energy generation. Confers resistance against macrolides. This chain is Macrolide export ATP-binding/permease protein MacB, found in Bartonella quintana (strain Toulouse) (Rochalimaea quintana).